Reading from the N-terminus, the 88-residue chain is Small ribosomal subunit protein uS19 (88 aa).

This sequence belongs to the universal ribosomal protein uS19 family.

Its function is as follows. Protein S19 forms a complex with S13 that binds strongly to the 16S ribosomal RNA. This Ureaplasma parvum serovar 3 (strain ATCC 27815 / 27 / NCTC 11736) protein is Small ribosomal subunit protein uS19.